Here is a 120-residue protein sequence, read N- to C-terminus: Protein crumbs homolog 3 (120 aa).

The signal sequence occupies residues 1 to 26; sequence MANPGLGLLLALGLPFLLARWGRAWG. Topologically, residues 27–59 are extracellular; that stretch reads QIQTTSANENSTVLPSSTSSSSDGNLRPEAITA. An N-linked (GlcNAc...) asparagine glycan is attached at N36. A helical transmembrane segment spans residues 60–80; that stretch reads IIVVFSLLAALLLAVGLALLV. At 81–120 the chain is on the cytoplasmic side; the sequence is RKLREKRQTEGTYRPSSEEQVGARVPPTPNLKLPPEERLI. The interval 84–120 is interaction with EPB41L5; sequence REKRQTEGTYRPSSEEQVGARVPPTPNLKLPPEERLI. The interval 87–120 is disordered; the sequence is RQTEGTYRPSSEEQVGARVPPTPNLKLPPEERLI. Residues 90–99 show a composition bias toward polar residues; the sequence is EGTYRPSSEE. The PDZ-binding signature appears at 117 to 120; sequence ERLI.

Component of a complex composed of CRB3, PALS1 and PATJ. Interacts (via C-terminus) with PALS1 (via PDZ domain). Interacts with PARD6A. Interacts (via intracellular domain) with EPB41L5. Interacts with WDR83. In terms of tissue distribution, preferentially expressed in epithelial tissues. Expressed at high levels in lung, kidney, and colon. Expressed at high levels in retina, colon and mammary glands. Moderately expressed in liver, spleen, pancreas and prostate. Moderately to weakly expressed in the placenta. Weakly expressed in skeletal muscle and small intestine.

It localises to the apical cell membrane. It is found in the cell junction. The protein resides in the tight junction. Functionally, involved in the establishment of cell polarity in mammalian epithelial cells. Regulates the morphogenesis of tight junctions. Involved in promoting phosphorylation and cytoplasmic retention of transcriptional coactivators YAP1 and WWTR1/TAZ which leads to suppression of TGFB1-dependent transcription of target genes such as CCN2/CTGF, SERPINE1/PAI1, SNAI1/SNAIL1 and SMAD7. This chain is Protein crumbs homolog 3, found in Homo sapiens (Human).